We begin with the raw amino-acid sequence, 295 residues long: Pyridoxal 5'-phosphate synthase subunit PdxS (295 aa).

Aspartate 25 serves as a coordination point for D-ribose 5-phosphate. The Schiff-base intermediate with D-ribose 5-phosphate role is filled by lysine 82. A D-ribose 5-phosphate-binding site is contributed by glycine 154. Residue arginine 166 coordinates D-glyceraldehyde 3-phosphate. D-ribose 5-phosphate contacts are provided by residues glycine 215 and 236–237 (GS).

The protein belongs to the PdxS/SNZ family. In terms of assembly, in the presence of PdxT, forms a dodecamer of heterodimers.

It carries out the reaction aldehydo-D-ribose 5-phosphate + D-glyceraldehyde 3-phosphate + L-glutamine = pyridoxal 5'-phosphate + L-glutamate + phosphate + 3 H2O + H(+). Its pathway is cofactor biosynthesis; pyridoxal 5'-phosphate biosynthesis. Catalyzes the formation of pyridoxal 5'-phosphate from ribose 5-phosphate (RBP), glyceraldehyde 3-phosphate (G3P) and ammonia. The ammonia is provided by the PdxT subunit. Can also use ribulose 5-phosphate and dihydroxyacetone phosphate as substrates, resulting from enzyme-catalyzed isomerization of RBP and G3P, respectively. The polypeptide is Pyridoxal 5'-phosphate synthase subunit PdxS (Oceanobacillus iheyensis (strain DSM 14371 / CIP 107618 / JCM 11309 / KCTC 3954 / HTE831)).